A 156-amino-acid chain; its full sequence is Phosphopantetheine adenylyltransferase (156 aa).

Position 9 (Ser9) interacts with substrate. ATP-binding positions include 9-10 and His17; that span reads SF. Residues Lys41, Ile74, and Lys88 each contribute to the substrate site. ATP contacts are provided by residues 89–91, Glu99, and 123–129; these read GLR and LLHVSSS.

It belongs to the bacterial CoaD family. In terms of assembly, homohexamer. Mg(2+) serves as cofactor.

The protein resides in the cytoplasm. The catalysed reaction is (R)-4'-phosphopantetheine + ATP + H(+) = 3'-dephospho-CoA + diphosphate. It participates in cofactor biosynthesis; coenzyme A biosynthesis; CoA from (R)-pantothenate: step 4/5. Its function is as follows. Reversibly transfers an adenylyl group from ATP to 4'-phosphopantetheine, yielding dephospho-CoA (dPCoA) and pyrophosphate. In Kocuria rhizophila (strain ATCC 9341 / DSM 348 / NBRC 103217 / DC2201), this protein is Phosphopantetheine adenylyltransferase.